A 681-amino-acid chain; its full sequence is Peroxisomal acyl-coenzyme A oxidase 2 (681 aa).

A phosphoserine mark is found at serine 3 and serine 9. Residues lysine 66, lysine 137, lysine 303, lysine 453, lysine 561, and lysine 667 each carry the N6-succinyllysine modification. Residues histidine 679–methionine 681 carry the Microbody targeting signal motif.

The protein belongs to the acyl-CoA oxidase family. As to quaternary structure, homodimer. It depends on FAD as a cofactor. Most abundant in liver. Also expressed in kidney. Not present in any other tissues tested.

The protein localises to the peroxisome. The catalysed reaction is (25R)-3alpha,7alpha,12alpha-trihydroxy-5beta-cholestan-26-oyl-CoA + A + H2O = (24R,25R)-3alpha,7alpha,12alpha,24-tetrahydroxy-5beta-cholestan-26-oyl-CoA + AH2. The enzyme catalyses (25S)-3alpha,7alpha,12alpha-trihydroxy-5beta-cholestan-26-oyl-CoA + O2 = (24E)-3alpha,7alpha,12alpha-trihydroxy-5beta-cholest-24-en-26-oyl-CoA + H2O2. Oxidizes the CoA esters of the bile acid intermediates di- and tri-hydroxycoprostanic acids. Capable of oxidizing short as well as long chain 2-methyl branched fatty acids. This Rattus norvegicus (Rat) protein is Peroxisomal acyl-coenzyme A oxidase 2.